A 181-amino-acid polypeptide reads, in one-letter code: ATP-dependent protease subunit HslV (181 aa).

The active site involves Thr-2. Residues Gly-157, Cys-160, and Thr-163 each contribute to the Na(+) site.

It belongs to the peptidase T1B family. HslV subfamily. A double ring-shaped homohexamer of HslV is capped on each side by a ring-shaped HslU homohexamer. The assembly of the HslU/HslV complex is dependent on binding of ATP.

It localises to the cytoplasm. The catalysed reaction is ATP-dependent cleavage of peptide bonds with broad specificity.. With respect to regulation, allosterically activated by HslU binding. Functionally, protease subunit of a proteasome-like degradation complex believed to be a general protein degrading machinery. The sequence is that of ATP-dependent protease subunit HslV from Hahella chejuensis (strain KCTC 2396).